A 581-amino-acid chain; its full sequence is Protein LYRIC (581 aa).

Residues 1–49 (MAARSWQDELAQQAEEGSARLRELLSVGLGFLRTELGLDLGLEPKRYPS) are Lumenal-facing. The activation of NF-kappa-B stretch occupies residues 1–71 (MAARSWQDEL…LLLFLLGYGW (71 aa)). A helical transmembrane segment spans residues 50-70 (WVILVGTGALGLLLLFLLGYG). Over 71–581 (WAAACAGARK…KKKKKARRET (511 aa)) the chain is Cytoplasmic. The segment at 72–168 (AAACAGARKK…EKSKKNKKKS (97 aa)) is interaction with BCCIP. Residues 77 to 221 (GARKKRRSPP…DSGSLDSTIP (145 aa)) are disordered. Positions 100-204 (EDPAQLKNLR…ISHREKRQQR (105 aa)) are interaction with RELA. A compositionally biased stretch (basic and acidic residues) spans 108-126 (LRSEEQKKKNRKKLPEKPK). At Thr142 the chain carries Phosphothreonine. Residues 159–168 (EKSKKNKKKS) are compositionally biased toward basic residues. Ser179 carries the phosphoserine modification. Residues 197-207 (HREKRQQRKRD) show a composition bias toward basic residues. Phosphoserine is present on residues Ser215 and Ser250. Lys263 is subject to N6-acetyllysine. The interval 280-581 (VNGGGWSEKS…KKKKKARRET (302 aa)) is disordered. A phosphoserine mark is found at Ser297, Ser305, and Ser310. Residues 318–331 (QSAWTQDPGDTNAN) are compositionally biased toward polar residues. A phosphoserine mark is found at Ser343 and Ser368. Composition is skewed to polar residues over residues 353 to 371 (EPVS…SRNQ) and 382 to 393 (NGLSSADPSSDW). Residues 380 to 442 (GLNGLSSADP…EGALPTGKSK (63 aa)) form a lung-homing for mammary tumors region. Residues Ser414 and Ser425 each carry the phosphoserine modification. Positions 421–433 (DQKDSDDDKEKGE) are enriched in basic and acidic residues. Over residues 440–450 (KSKKKKKKKKK) the composition is skewed to basic residues. 4 positions are modified to phosphoserine: Ser456, Ser477, Ser493, and Ser495. 2 stretches are compositionally biased toward polar residues: residues 519–535 (PSVT…SSQV) and 548–567 (NAKQ…NWES). A Phosphoserine modification is found at Ser567. The segment covering 570–581 (QIKKKKKARRET) has biased composition (basic residues).

As to quaternary structure, interacts with BCCIP, CREBBP/CBP and RELA/p65. In terms of tissue distribution, widely expressed, with highest levels in liver, kidney, prostate and small intestine. Not detected in endothelial cells.

The protein localises to the endoplasmic reticulum membrane. It is found in the nucleus membrane. It localises to the cell junction. The protein resides in the tight junction. Its subcellular location is the nucleus. The protein localises to the nucleolus. It is found in the cytoplasm. It localises to the perinuclear region. Functionally, down-regulates SLC1A2/EAAT2 promoter activity when expressed ectopically. Activates the nuclear factor kappa-B (NF-kappa-B) transcription factor. Promotes anchorage-independent growth of immortalized melanocytes and astrocytes which is a key component in tumor cell expansion. Promotes lung metastasis and also has an effect on bone and brain metastasis, possibly by enhancing the seeding of tumor cells to the target organ endothelium. Induces chemoresistance. In Rattus norvegicus (Rat), this protein is Protein LYRIC (Mtdh).